A 192-amino-acid chain; its full sequence is MNNNISITTEALSKAHLHSFKHHASSVNGILLGKADKNSILITDIIPLFHTQTLLPMFEVAMIQIEKYCRDNNIDMVGYYHSNQCIANELEPEPIAKKIADRLNNELNNMCFLMISKIEVNRPSGLVSIDKVGSDWLKNRKTLITIDTTSNSEDINEILKRNLQNIKESQIYDFEEYLSNPTRDWLNKSLVL.

Residues 5-135 enclose the MPN domain; sequence ISITTEALSK…LVSIDKVGSD (131 aa).

Belongs to the EMC8/EMC9 family.

This is ER membrane protein complex subunit 8/9 homolog from Dictyostelium discoideum (Social amoeba).